The following is a 346-amino-acid chain: uncharacterized protein (346 aa).

The interval 10–109 is disordered; the sequence is WDFIMTDPSS…SNSNGNNSPV (100 aa). Over residues 26–44 the composition is skewed to low complexity; the sequence is KGSSKNGSPKTSSPKSGSP. Over residues 56 to 67 the composition is skewed to polar residues; that stretch reads NQQLLQNDSINL. The span at 94–109 shows a compositional bias: low complexity; the sequence is KSSVVPSNSNGNNSPV.

This is an uncharacterized protein from Dictyostelium discoideum (Social amoeba).